Reading from the N-terminus, the 337-residue chain is Casein kinase I isoform alpha-like (337 aa).

Position 8 is an N6-acetyllysine (K8). A Protein kinase domain is found at 17 to 285 (YKLVRKIGSG…YLRQLFRILF (269 aa)). ATP is bound by residues 23–31 (IGSGSFGDV) and K46. The Proton acceptor role is filled by D136. A compositionally biased stretch (low complexity) spans 309 to 325 (AASSSGQGQQAQTQTGK). The interval 309–337 (AASSSGQGQQAQTQTGKQTEKNKNNVKDN) is disordered. Over residues 326–337 (QTEKNKNNVKDN) the composition is skewed to basic and acidic residues.

It belongs to the protein kinase superfamily. CK1 Ser/Thr protein kinase family. Casein kinase I subfamily. Interacts with FAM83A, FAM83B, FAM83C, FAM83D, FAM83E, FAM83F, FAM83G and FAM83H (via DUF1669).

Its subcellular location is the cytoplasm. It catalyses the reaction L-seryl-[protein] + ATP = O-phospho-L-seryl-[protein] + ADP + H(+). The catalysed reaction is L-threonyl-[protein] + ATP = O-phospho-L-threonyl-[protein] + ADP + H(+). Its function is as follows. Casein kinases are operationally defined by their preferential utilization of acidic proteins such as caseins as substrates. It can phosphorylate a large number of proteins. Participates in Wnt signaling. This Homo sapiens (Human) protein is Casein kinase I isoform alpha-like (CSNK1A1L).